A 161-amino-acid chain; its full sequence is Large ribosomal subunit protein uL11 (161 aa).

It belongs to the universal ribosomal protein uL11 family. In terms of assembly, part of the ribosomal stalk of the 50S ribosomal subunit. Interacts with L10 and the large rRNA to form the base of the stalk. L10 forms an elongated spine to which L12 dimers bind in a sequential fashion forming a multimeric L10(L12)X complex.

Forms part of the ribosomal stalk which helps the ribosome interact with GTP-bound translation factors. This is Large ribosomal subunit protein uL11 from Methanococcoides burtonii (strain DSM 6242 / NBRC 107633 / OCM 468 / ACE-M).